A 365-amino-acid polypeptide reads, in one-letter code: MNLAAMDPTTYDVQLEAKCVKLKQLFADFDTPELETFSSEPAHYRMRAEFRVWHEGEDLYYYMFDKELNSKVRCDQFLPASELINKMMPALVELLKPNTILRHRLFQIDFLSTLSGEILVSLLYHKQLDSEWEQQAKILKQTLSTQFNVNLIGRARKQKIIFDKDFVVESLNVAGKQLQYHQIENSFTQPNGKVSVKMLEWAIDITKNSSGDLLELYCGNGNFSIALAQNFERVLATELAKPSVESAQYNIKVNQVENLQIIRMSAEDFTEAMAKKRSFRRLEGIDLDSYNCNTIFVDPPRAGLDADTVKLVQGYERIVYISCNPNTLIDNLAELSKTHKITRFALFDQFPYTDHMESGVFLEKK.

Positions 189, 217, 222, 238, and 298 each coordinate S-adenosyl-L-methionine. The active-site Nucleophile is Cys-323. The active-site Proton acceptor is the Glu-357.

This sequence belongs to the class I-like SAM-binding methyltransferase superfamily. RNA M5U methyltransferase family. TrmA subfamily.

It carries out the reaction uridine(54) in tRNA + S-adenosyl-L-methionine = 5-methyluridine(54) in tRNA + S-adenosyl-L-homocysteine + H(+). The catalysed reaction is uridine(341) in tmRNA + S-adenosyl-L-methionine = 5-methyluridine(341) in tmRNA + S-adenosyl-L-homocysteine + H(+). Its function is as follows. Dual-specificity methyltransferase that catalyzes the formation of 5-methyluridine at position 54 (m5U54) in all tRNAs, and that of position 341 (m5U341) in tmRNA (transfer-mRNA). In Shewanella pealeana (strain ATCC 700345 / ANG-SQ1), this protein is tRNA/tmRNA (uracil-C(5))-methyltransferase.